The chain runs to 335 residues: Pyridoxal 5'-phosphate synthase subunit PdxS (335 aa).

Asp-59 is a D-ribose 5-phosphate binding site. The Schiff-base intermediate with D-ribose 5-phosphate role is filled by Lys-116. Gly-188 serves as a coordination point for D-ribose 5-phosphate. Lys-200 is a D-glyceraldehyde 3-phosphate binding site. D-ribose 5-phosphate is bound by residues Gly-253 and 274-275 (GS).

The protein belongs to the PdxS/SNZ family. In the presence of PdxT, forms a dodecamer of heterodimers.

The enzyme catalyses aldehydo-D-ribose 5-phosphate + D-glyceraldehyde 3-phosphate + L-glutamine = pyridoxal 5'-phosphate + L-glutamate + phosphate + 3 H2O + H(+). It participates in cofactor biosynthesis; pyridoxal 5'-phosphate biosynthesis. In terms of biological role, catalyzes the formation of pyridoxal 5'-phosphate from ribose 5-phosphate (RBP), glyceraldehyde 3-phosphate (G3P) and ammonia. The ammonia is provided by the PdxT subunit. Can also use ribulose 5-phosphate and dihydroxyacetone phosphate as substrates, resulting from enzyme-catalyzed isomerization of RBP and G3P, respectively. This chain is Pyridoxal 5'-phosphate synthase subunit PdxS, found in Hyperthermus butylicus (strain DSM 5456 / JCM 9403 / PLM1-5).